A 294-amino-acid polypeptide reads, in one-letter code: Large ribosomal subunit protein uL4m (294 aa).

Residues 120 to 139 form a disordered region; the sequence is VRGGGRKPWQQKGSGRARHG. At arginine 147 the chain carries Omega-N-methylarginine.

This sequence belongs to the universal ribosomal protein uL4 family. As to quaternary structure, component of the mitochondrial ribosome large subunit (39S) which comprises a 16S rRNA and about 50 distinct proteins. Interacts with MIEF1 upstream open reading frame protein.

The protein resides in the mitochondrion. The polypeptide is Large ribosomal subunit protein uL4m (MRPL4) (Bos taurus (Bovine)).